A 1590-amino-acid chain; its full sequence is von Willebrand factor D and EGF domain-containing protein (1590 aa).

The signal sequence occupies residues methionine 1–alanine 20. An N-linked (GlcNAc...) asparagine glycan is attached at asparagine 367. A VWFD domain is found at alanine 423–methionine 606. 2 disulfide bridges follow: cysteine 425-cysteine 565 and cysteine 468-cysteine 477. Asparagine 703 and asparagine 968 each carry an N-linked (GlcNAc...) asparagine glycan. Positions threonine 1177–glutamate 1216 constitute an EGF-like 1 domain. 3 cysteine pairs are disulfide-bonded: cysteine 1181–cysteine 1189, cysteine 1183–cysteine 1204, and cysteine 1206–cysteine 1215. The span at aspartate 1268–alanine 1280 shows a compositional bias: basic and acidic residues. A disordered region spans residues aspartate 1268 to lysine 1288. 6 EGF-like domains span residues alanine 1294–glutamine 1326, aspartate 1358–glutamate 1390, serine 1422–glutamine 1454, asparagine 1455–glutamine 1486, asparagine 1518–glutamine 1550, and isoleucine 1551–glutamate 1582. Cystine bridges form between cysteine 1298–cysteine 1308, cysteine 1302–cysteine 1314, cysteine 1316–cysteine 1325, cysteine 1362–cysteine 1372, cysteine 1366–cysteine 1378, cysteine 1380–cysteine 1389, cysteine 1426–cysteine 1436, cysteine 1430–cysteine 1442, cysteine 1444–cysteine 1453, cysteine 1458–cysteine 1468, cysteine 1462–cysteine 1474, cysteine 1522–cysteine 1532, cysteine 1526–cysteine 1538, cysteine 1540–cysteine 1549, cysteine 1554–cysteine 1564, cysteine 1558–cysteine 1570, and cysteine 1572–cysteine 1581.

Its subcellular location is the secreted. This Homo sapiens (Human) protein is von Willebrand factor D and EGF domain-containing protein (VWDE).